The chain runs to 287 residues: tRNA uridine(34) hydroxylase (287 aa).

The region spanning 132–226 (EGRPVVMLDT…YFEEVGGAHY (95 aa)) is the Rhodanese domain. Cys186 serves as the catalytic Cysteine persulfide intermediate.

The protein belongs to the TrhO family.

It catalyses the reaction uridine(34) in tRNA + AH2 + O2 = 5-hydroxyuridine(34) in tRNA + A + H2O. Its function is as follows. Catalyzes oxygen-dependent 5-hydroxyuridine (ho5U) modification at position 34 in tRNAs. The polypeptide is tRNA uridine(34) hydroxylase (Paraburkholderia xenovorans (strain LB400)).